Consider the following 885-residue polypeptide: Dual serine/threonine and tyrosine protein kinase (885 aa).

The 255-residue stretch at Pro-614–Leu-868 folds into the Protein kinase domain. ATP contacts are provided by residues Leu-620–Val-628 and Lys-643. Asp-739 functions as the Proton acceptor in the catalytic mechanism.

Belongs to the protein kinase superfamily. Ser/Thr protein kinase family.

It is found in the cytoplasm. It localises to the cell membrane. The protein localises to the apical cell membrane. The protein resides in the basolateral cell membrane. Its subcellular location is the cell junction. The enzyme catalyses L-seryl-[protein] + ATP = O-phospho-L-seryl-[protein] + ADP + H(+). It carries out the reaction L-threonyl-[protein] + ATP = O-phospho-L-threonyl-[protein] + ADP + H(+). It catalyses the reaction L-tyrosyl-[protein] + ATP = O-phospho-L-tyrosyl-[protein] + ADP + H(+). Its function is as follows. May act as a positive regulator of ERK phosphorylation downstream of fibroblast growth factor-receptor activation. May induce both caspase-dependent apoptosis and caspase-independent cell death. Plays a role in the embryonic development. This is Dual serine/threonine and tyrosine protein kinase (dstyk) from Danio rerio (Zebrafish).